Here is a 502-residue protein sequence, read N- to C-terminus: Type II secretion system protein E (502 aa).

ATP is bound at residue 263–270; sequence GPTGSGKT. Residues cysteine 396, cysteine 399, cysteine 429, and cysteine 432 each contribute to the Zn(2+) site. A disordered region spans residues 461–480; sequence SSEQEMTRHARTSGPSIRDD.

Belongs to the GSP E family. As to quaternary structure, homodimer. Dimerization is directed by a relatively short domain near the extreme N-terminus and is essential for extracellular protein secretion. May form homooligomers. Interacts with XcpY/GspL. Forms an inner membrane platform subcomplex with XcpS/GspF, XcpY/GspL and XcpZ/GspM. The cofactor is Zn(2+).

It is found in the cell inner membrane. It catalyses the reaction ATP + H2O + cellular proteinSide 1 = ADP + phosphate + cellular proteinSide 2.. Functionally, ATPase component of the type II secretion system required for the energy-dependent secretion of extracellular factors such as proteases and toxins from the periplasm. Acts as a molecular motor to provide the energy that is required for assembly of the pseudopilus and the extrusion of substrates generated in the cytoplasm. In Pseudomonas aeruginosa (strain ATCC 15692 / DSM 22644 / CIP 104116 / JCM 14847 / LMG 12228 / 1C / PRS 101 / PAO1), this protein is Type II secretion system protein E (xcpR).